A 107-amino-acid chain; its full sequence is U1-lycotoxin-Ls1q (107 aa).

A signal peptide spans 1-20; the sequence is MMKVLVVVALLVTLISYSSS. Positions 21 to 41 are excised as a propeptide; sequence EGIDDLEADELLSLMANEQTR. 4 disulfide bridges follow: C44-C59, C51-C68, C58-C86, and C70-C84.

It belongs to the neurotoxin 19 (CSTX) family. 04 (U1-Lctx) subfamily. In terms of tissue distribution, expressed by the venom gland.

The protein localises to the secreted. This chain is U1-lycotoxin-Ls1q, found in Lycosa singoriensis (Wolf spider).